Here is a 536-residue protein sequence, read N- to C-terminus: Velvet complex subunit B (536 aa).

Over residues Met-1 to Ser-26 the composition is skewed to polar residues. Disordered stretches follow at residues Met-1–Arg-27, Pro-106–Phe-143, Ser-157–Val-409, and Lys-508–Asp-536. The region spanning Gly-25–Arg-512 is the Velvet domain. A compositionally biased stretch (pro residues) spans Pro-114 to Phe-143. 2 stretches are compositionally biased toward low complexity: residues Ala-158–Ala-170 and Pro-190–Tyr-265. The segment covering Thr-280 to Thr-305 has biased composition (polar residues). The span at Ala-306–Glu-315 shows a compositional bias: basic and acidic residues. The span at Pro-328–Thr-342 shows a compositional bias: low complexity. The span at Glu-356–Ala-399 shows a compositional bias: basic and acidic residues. Positions Gln-400 to Val-409 are enriched in polar residues. A compositionally biased stretch (basic residues) spans Leu-511–Gly-525.

The protein belongs to the velvet family. VelB subfamily. In terms of assembly, component of the heterotrimeric velvet complex composed of laeA, veA and velB; VeA acting as a bridging protein between laeA and velB. Forms a heterodimeric complex with vosA; the formation of the velB-vosA complex is light-dependent.

It localises to the nucleus. The protein resides in the cytoplasm. Functionally, component of the velvet transcription factor complex that controls sexual/asexual developmental ratio in response to light, promoting sexual development in the darkness while stimulating asexual sporulation under illumination. The velvet complex acts as a global regulator for secondary metabolite gene expression. Component of the velB-VosA heterodimeric complex that plays a dual role in activating genes associated with spore maturation and repressing certain development-associated genes. The velB-VosA complex binds DNA through the DNA-binding domain of vosA that recognizes an 11-nucleotide consensus sequence 5'-CTGGCCGCGGC-3' consisting of two motifs in the promoters of key developmental regulatory genes. This Schizophyllum commune (strain H4-8 / FGSC 9210) (Split gill fungus) protein is Velvet complex subunit B.